Here is a 103-residue protein sequence, read N- to C-terminus: UPF0473 protein LCA_0390 (103 aa).

This sequence belongs to the UPF0473 family.

In Latilactobacillus sakei subsp. sakei (strain 23K) (Lactobacillus sakei subsp. sakei), this protein is UPF0473 protein LCA_0390.